The primary structure comprises 424 residues: Serine--tRNA ligase (424 aa).

230–232 (TAE) provides a ligand contact to L-serine. An ATP-binding site is contributed by 261-263 (RSE). Position 284 (Glu-284) interacts with L-serine. 348 to 351 (EISS) is a binding site for ATP. Ser-384 is a binding site for L-serine.

Belongs to the class-II aminoacyl-tRNA synthetase family. Type-1 seryl-tRNA synthetase subfamily. In terms of assembly, homodimer. The tRNA molecule binds across the dimer.

The protein localises to the cytoplasm. It carries out the reaction tRNA(Ser) + L-serine + ATP = L-seryl-tRNA(Ser) + AMP + diphosphate + H(+). It catalyses the reaction tRNA(Sec) + L-serine + ATP = L-seryl-tRNA(Sec) + AMP + diphosphate + H(+). It participates in aminoacyl-tRNA biosynthesis; selenocysteinyl-tRNA(Sec) biosynthesis; L-seryl-tRNA(Sec) from L-serine and tRNA(Sec): step 1/1. Catalyzes the attachment of serine to tRNA(Ser). Is also able to aminoacylate tRNA(Sec) with serine, to form the misacylated tRNA L-seryl-tRNA(Sec), which will be further converted into selenocysteinyl-tRNA(Sec). In Streptococcus pneumoniae (strain JJA), this protein is Serine--tRNA ligase.